We begin with the raw amino-acid sequence, 270 residues long: Protein tonB2 (270 aa).

The Cytoplasmic portion of the chain corresponds to 1–51; the sequence is MATPQPVDARTQPWRETPGGDLVALGRPVRQALHLVRHNPAQGRVLSRRET. The chain crosses the membrane as a helical span at residues 52–69; the sequence is ILLVLFALTLHGAVIHWL. Residues 70 to 270 lie on the Periplasmic side of the membrane; the sequence is SQQRTPALPE…VSVPIDFKLN (201 aa). A disordered region spans residues 80–187; that stretch reads VPPQVPPMTI…LTPPSANAGY (108 aa). Positions 94-118 are enriched in pro residues; that stretch reads PAPPVVEPPPPEPLPPVVEEPPPPV. Residues 133 to 143 show a composition bias toward basic residues; that stretch reads PKPKPKPKPQP. Positions 144-180 are enriched in pro residues; the sequence is RPKPAPKAVEPAPPAPPQPAAPPAPPAPAAAPAPLTP. The TonB C-terminal domain occupies 180–270; sequence PPSANAGYLH…VSVPIDFKLN (91 aa).

It belongs to the TonB family. Homodimer. Forms a complex with the accessory proteins ExbB and ExbD.

Its subcellular location is the cell inner membrane. Its function is as follows. Interacts with outer membrane receptor proteins that carry out high-affinity binding and energy dependent uptake into the periplasmic space of specific substrates. It could act to transduce energy from the cytoplasmic membrane to specific energy-requiring processes in the outer membrane, resulting in the release into the periplasm of ligands bound by these outer membrane proteins. The polypeptide is Protein tonB2 (tonB2) (Pseudomonas aeruginosa (strain ATCC 15692 / DSM 22644 / CIP 104116 / JCM 14847 / LMG 12228 / 1C / PRS 101 / PAO1)).